Reading from the N-terminus, the 79-residue chain is Major outer membrane lipoprotein Lpp 2 (79 aa).

Positions Met-1–Gly-21 are cleaved as a signal peptide. Cys-22 carries the N-palmitoyl cysteine lipid modification. Cys-22 is lipidated: S-diacylglycerol cysteine. 2 consecutive repeats follow at residues Asn-25 to Val-35 and Ser-39 to Val-49. Positions Ile-28 to Arg-76 form a coiled coil. The interval Lys-60–Lys-79 is disordered. Position 79 is an N6-murein peptidoglycan lysine (Lys-79).

It belongs to the Lpp family. In terms of assembly, homotrimer.

The protein resides in the cell outer membrane. It is found in the secreted. Its subcellular location is the cell wall. In terms of biological role, a highly abundant outer membrane lipoprotein that controls the distance between the inner and outer membranes. The only protein known to be covalently linked to the peptidoglycan network (PGN). Also non-covalently binds the PGN. The link between the cell outer membrane and PGN contributes to maintenance of the structural and functional integrity of the cell envelope, and maintains the correct distance between the PGN and the outer membrane. In Salmonella paratyphi A (strain ATCC 9150 / SARB42), this protein is Major outer membrane lipoprotein Lpp 2.